Consider the following 101-residue polypeptide: Small ribosomal subunit protein uS14 (101 aa).

The protein belongs to the universal ribosomal protein uS14 family. As to quaternary structure, part of the 30S ribosomal subunit. Contacts proteins S3 and S10.

In terms of biological role, binds 16S rRNA, required for the assembly of 30S particles and may also be responsible for determining the conformation of the 16S rRNA at the A site. The chain is Small ribosomal subunit protein uS14 from Zymomonas mobilis subsp. mobilis (strain ATCC 31821 / ZM4 / CP4).